Here is a 533-residue protein sequence, read N- to C-terminus: Retinoic acid receptor RXR-beta (533 aa).

A disordered region spans residues Met-1–Gly-23. A modulating region spans residues Met-1–Leu-204. Arg-25 is modified (omega-N-methylarginine). The tract at residues Trp-36–Pro-181 is disordered. Residues Ala-46–Pro-61 are compositionally biased toward low complexity. Basic and acidic residues predominate over residues Glu-67–Ser-82. Pro residues-rich tracts occupy residues Asn-89–Thr-109 and Ala-118–Ser-131. Low complexity predominate over residues Pro-132–Pro-143. Positions Gly-144–Phe-153 are enriched in pro residues. 2 consecutive NR C4-type zinc fingers follow at residues Cys-205–Cys-225 and Cys-241–Cys-265. A DNA-binding region (nuclear receptor) is located at residues Cys-205–Met-270. A hinge region spans residues Lys-271–Ala-295. The span at Gln-276–Asp-288 shows a compositional bias: basic and acidic residues. Disordered stretches follow at residues Gln-276–Met-299 and Gln-313–Val-336. Residues Pro-296–Pro-529 form the NR LBD domain. Gly residues predominate over residues Glu-320 to Gly-329.

The protein belongs to the nuclear hormone receptor family. NR2 subfamily. In terms of assembly, homodimer (in vitro). Heterodimer with other retinoic acid receptor family members. Binds DNA preferentially as a RAR/RXR heterodimer. Interacts with NR1H3. Interacts with AKAP13. Expressed in aortic endothelial cells (at protein level). Expressed in monocytes. Expressed in a variety of tumor cell lines.

It localises to the nucleus. It is found in the cytoplasm. Functionally, receptor for retinoic acid. Retinoic acid receptors bind as heterodimers to their target response elements in response to their ligands, all-trans or 9-cis retinoic acid, and regulate gene expression in various biological processes. The RAR/RXR heterodimers bind to the retinoic acid response elements (RARE). In Homo sapiens (Human), this protein is Retinoic acid receptor RXR-beta (RXRB).